A 144-amino-acid polypeptide reads, in one-letter code: Large ribosomal subunit protein uL16 (144 aa).

Over residues 1–19 (MLLPKRVKYRRQHRPKTTG) the composition is skewed to basic residues. The segment at 1–23 (MLLPKRVKYRRQHRPKTTGRSKG) is disordered.

It belongs to the universal ribosomal protein uL16 family. In terms of assembly, part of the 50S ribosomal subunit.

Functionally, binds 23S rRNA and is also seen to make contacts with the A and possibly P site tRNAs. This chain is Large ribosomal subunit protein uL16, found in Staphylococcus carnosus (strain TM300).